The sequence spans 216 residues: 3-keto-L-gulonate-6-phosphate decarboxylase UlaD (216 aa).

Residue D11 participates in substrate binding. Positions 33 and 62 each coordinate Mg(2+). R192 provides a ligand contact to substrate.

Belongs to the HPS/KGPDC family. KGPDC subfamily. As to quaternary structure, homodimer. Mg(2+) serves as cofactor.

The enzyme catalyses 3-dehydro-L-gulonate 6-phosphate + H(+) = L-xylulose 5-phosphate + CO2. It participates in cofactor degradation; L-ascorbate degradation; D-xylulose 5-phosphate from L-ascorbate: step 2/4. In terms of biological role, catalyzes the decarboxylation of 3-keto-L-gulonate-6-P into L-xylulose-5-P. Is involved in the anaerobic L-ascorbate utilization. The sequence is that of 3-keto-L-gulonate-6-phosphate decarboxylase UlaD from Escherichia coli O127:H6 (strain E2348/69 / EPEC).